A 111-amino-acid polypeptide reads, in one-letter code: Cytochrome c3, 26 kDa (111 aa).

16 residues coordinate heme c: His30, His33, Cys38, Cys41, His42, His43, Cys54, Cys59, His60, His77, Cys86, Cys89, His90, Cys105, Cys108, and His109.

As to quaternary structure, homodimer. Heme c is required as a cofactor.

It is found in the periplasm. Functionally, participates in sulfate respiration coupled with phosphorylation by transferring electrons from the enzyme dehydrogenase to ferredoxin. This is Cytochrome c3, 26 kDa from Desulfomicrobium norvegicum (strain DSM 1741 / NCIMB 8310) (Desulfovibrio baculatus (strain Norway 4)).